We begin with the raw amino-acid sequence, 219 residues long: C-type lectin domain family 4 member E (219 aa).

The Cytoplasmic segment spans residues 1-19 (MNSSKSSETQCTERGCFSS). The chain crosses the membrane as a helical; Signal-anchor for type II membrane protein span at residues 20–40 (QMFLWTVAGIPILFLSACFIT). Residues 41–219 (RCVVTFRIFQ…INPLNKGKSL (179 aa)) lie on the Extracellular side of the membrane. Asn62 is a glycosylation site (N-linked (GlcNAc...) asparagine). A disulfide bond links Cys80 and Cys91. In terms of domain architecture, C-type lectin spans 87–206 (FQSSCYFFST…CFLNYFRICE (120 aa)). A glycan (N-linked (GlcNAc...) asparagine) is linked at Asn107. 2 disulfides stabilise this stretch: Cys108/Cys205 and Cys179/Cys197. Ca(2+) contacts are provided by Val117, Asn119, Glu123, Glu169, Asn171, Asn193, Asp194, and Glu206. The Confers specificity for glucose/mannose-type carbohydrates signature appears at 169-171 (EPN).

In terms of assembly, monomer and homodimer. Interacts with signaling adapter Fc receptor gamma chain/FCER1G to form a functional complex; the interaction is direct. Alternatively, acts as a bridge for interaction between CLEC4D and FCER1G. A heterodimer of CLEC4E and CLEC4D associates with FCER1G to form a functional complex. Interacts with SAP130 nuclear protein that is released from necrotic cells; the interaction is direct. Expressed in monocytes and macrophages.

It localises to the cell membrane. The protein localises to the cell projection. Its subcellular location is the phagocytic cup. Functionally, calcium-dependent lectin that acts as a pattern recognition receptor (PRR) of the innate immune system: recognizes damage-associated molecular patterns (DAMPs) of abnormal self and pathogen-associated molecular patterns (PAMPs) of bacteria and fungi. The PAMPs notably include mycobacterial trehalose 6,6'-dimycolate (TDM), a cell wall glycolipid with potent adjuvant immunomodulatory functions. Interacts with signaling adapter Fc receptor gamma chain/FCER1G to form a functional complex in myeloid cells. Binding of mycobacterial trehalose 6,6'-dimycolate (TDM) to this receptor complex leads to phosphorylation of the immunoreceptor tyrosine-based activation motif (ITAM) of FCER1G, triggering activation of SYK, CARD9 and NF-kappa-B, consequently driving maturation of antigen-presenting cells and shaping antigen-specific priming of T-cells toward effector T-helper 1 and T-helper 17 cell subtypes. Also recognizes alpha-mannose residues on pathogenic fungi of the genus Malassezia and mediates macrophage activation. Through recognition of DAMPs released upon nonhomeostatic cell death, enables immune sensing of damaged self and promotes inflammatory cell infiltration into the damaged tissue. In Homo sapiens (Human), this protein is C-type lectin domain family 4 member E.